The chain runs to 152 residues: Lipoprotein signal peptidase (152 aa).

3 helical membrane-spanning segments follow: residues 5 to 25, 61 to 81, and 84 to 104; these read LFVL…FWIV, WFFV…LATH, and LNIW…GNFI. Residues Asp-114 and Asp-130 contribute to the active site. Residues 125–145 form a helical membrane-spanning segment; sequence IFNVADSYLTVGVILLLICLW.

It belongs to the peptidase A8 family.

It is found in the cell membrane. The catalysed reaction is Release of signal peptides from bacterial membrane prolipoproteins. Hydrolyzes -Xaa-Yaa-Zaa-|-(S,diacylglyceryl)Cys-, in which Xaa is hydrophobic (preferably Leu), and Yaa (Ala or Ser) and Zaa (Gly or Ala) have small, neutral side chains.. Its pathway is protein modification; lipoprotein biosynthesis (signal peptide cleavage). In terms of biological role, this protein specifically catalyzes the removal of signal peptides from prolipoproteins. The chain is Lipoprotein signal peptidase from Streptococcus pyogenes serotype M1.